A 407-amino-acid polypeptide reads, in one-letter code: Serine/threonine-protein kinase GRIK2 (407 aa).

The interval 21 to 64 (SGSRNQQSPKPYDDDTHSCDSDVTSTARGEEEEDEEEVEQKSRS) is disordered. A compositionally biased stretch (basic and acidic residues) spans 31–40 (PYDDDTHSCD). A Protein kinase domain is found at 107–370 (YVRVCKIGSG…LKNVSEHPWV (264 aa)). ATP contacts are provided by residues 113–121 (IGSGSYGKV) and lysine 136. A Phosphothreonine; by autocatalysis modification is found at threonine 153. Aspartate 238 acts as the Proton acceptor in catalysis. Serine 260 is subject to Phosphoserine; by KIN10.

The protein belongs to the protein kinase superfamily. Ser/Thr protein kinase family. As to quaternary structure, associates with the SNF1-related protein kinase (SnRK) complex. Interacts with AL1, a geminivirus (TGMV) protein essential for viral replication. Expressed in shoot apical meristem, leaf primordium and emerging petiole (at protein level).

The catalysed reaction is L-seryl-[protein] + ATP = O-phospho-L-seryl-[protein] + ADP + H(+). It carries out the reaction L-threonyl-[protein] + ATP = O-phospho-L-threonyl-[protein] + ADP + H(+). With respect to regulation, activated when autophosphorylated at Thr-153 and inactivated when phosphorylated at Ser-260 by SnRK1.1/KIN10. Activates SnRK1.1/KIN10 and SnRK1.2/KIN11 by phosphorylation of their activation-loop 'Thr-198' and 'Thr-176', respectively. Required for the regulation by SnRK1 kinases of the transcription of a large set of genes, the modification the activity of metabolic enzymes, and the control of various nutrient-responsive cellular developmental processes. This Arabidopsis thaliana (Mouse-ear cress) protein is Serine/threonine-protein kinase GRIK2 (GRIK2).